A 926-amino-acid polypeptide reads, in one-letter code: Translation initiation factor IF-2 (926 aa).

2 disordered regions span residues 1-185 and 200-299; these read MTDS…EEVE and EDKA…RRRG. 2 stretches are compositionally biased toward low complexity: residues 13 to 24 and 70 to 96; these read TGKKTLTLKPTG and APAT…AAPQ. Positions 110–133 are enriched in polar residues; that stretch reads TNQYSQQRHPGQQNRPQASSQPSR. Basic and acidic residues predominate over residues 151–185; sequence MDARRRALAEAQVREVEDAKRRAEEEVRRQAEEVE. Low complexity predominate over residues 211 to 251; that stretch reads APEPVAEPVAPVAETPRAADPAPRAPSPAGAKPAAGAPAPS. Residues 424 to 591 form the tr-type G domain; that stretch reads SRPPVVTIMG…AVLLQAEILD (168 aa). Residues 433–440 form a G1 region; it reads GHVDHGKT. 433–440 provides a ligand contact to GTP; that stretch reads GHVDHGKT. The interval 458–462 is G2; the sequence is GITQH. The G3 stretch occupies residues 479-482; it reads DTPG. GTP contacts are provided by residues 479–483 and 533–536; these read DTPGH and NKID. A G4 region spans residues 533-536; sequence NKID. Residues 569–571 are G5; it reads SAK.

Belongs to the TRAFAC class translation factor GTPase superfamily. Classic translation factor GTPase family. IF-2 subfamily.

It localises to the cytoplasm. In terms of biological role, one of the essential components for the initiation of protein synthesis. Protects formylmethionyl-tRNA from spontaneous hydrolysis and promotes its binding to the 30S ribosomal subunits. Also involved in the hydrolysis of GTP during the formation of the 70S ribosomal complex. The sequence is that of Translation initiation factor IF-2 from Allorhizobium ampelinum (strain ATCC BAA-846 / DSM 112012 / S4) (Agrobacterium vitis (strain S4)).